A 567-amino-acid chain; its full sequence is Inactive protein kinase SELMODRAFT_444075 (567 aa).

The disordered stretch occupies residues 148–206; sequence NETRRKGPSPSEVLNSTTSSPASHKPQVLNDFLRMKESREYTEETDTQRNVSRPVDRVS. Polar residues predominate over residues 159 to 169; the sequence is EVLNSTTSSPA. A compositionally biased stretch (basic and acidic residues) spans 180–189; sequence LRMKESREYT. Residues 196-206 show a composition bias toward low complexity; it reads RNVSRPVDRVS. Residues 255–487 form the Protein kinase domain; it reads FSDVNFLAEG…EGDSLSDTSL (233 aa). ATP is bound by residues 261–269 and Lys283; that span reads LAEGGYGSV. Over residues 511–538 the composition is skewed to low complexity; it reads DSSSSRSSSASSVLKSFSRTQHSSRSSS. The tract at residues 511 to 567 is disordered; sequence DSSSSRSSSASSVLKSFSRTQHSSRSSSNAGSPLNPAATQALAFKKYNKNTTRHTQD. Over residues 556 to 567 the composition is skewed to basic residues; that stretch reads KYNKNTTRHTQD.

The polypeptide is Inactive protein kinase SELMODRAFT_444075 (Selaginella moellendorffii (Spikemoss)).